Reading from the N-terminus, the 534-residue chain is Calmodulin calcium-dependent NAD kinase (534 aa).

The calmodulin-binding stretch occupies residues 167-196 (QKVPKLKDFVMAATRKQRFERVTKDLKVKR). 238 to 245 (GGMGAGKS) contributes to the ATP binding site.

In terms of assembly, interacts with calmodulin (CaM) in a calcium Ca(2+)-dependent manner in vitro. Ca(2+) serves as cofactor.

It localises to the mitochondrion outer membrane. The catalysed reaction is NAD(+) + ATP = ADP + NADP(+) + H(+). Its function is as follows. Phosphorylates NAD(+) to produce NADP(+) in a calmodulin calcium-dependent manner. Does not possess activity toward NADH. Has broad specificity for the phosphoryl donor, as ATP, CTP, GTP and UTP can be used interchangeably and produce similar efficiencies. May play a role in producing NADP(H) needed to regulate the elicitor-induced reactive oxygen species (ROS) burst by sustaining the activity of NADPH oxidases. Does not seem to play a role in photosynthesis-driven growth. This chain is Calmodulin calcium-dependent NAD kinase, found in Arabidopsis thaliana (Mouse-ear cress).